The chain runs to 314 residues: Olfactory receptor 51I1 (314 aa).

Topologically, residues 1 to 27 (MLGLNGTPFQPATLQLTGIPGIQTGLT) are extracellular. Residues 28–48 (WVALIFCILYMISIVGNLSIL) traverse the membrane as a helical segment. Residues 49-56 (TLVFWEPA) are Cytoplasmic-facing. Residues 57 to 77 (LHQPMYYFLSMLALNDLGVSF) traverse the membrane as a helical segment. The Extracellular segment spans residues 78–101 (STLPTVISTFCFNYNHVAFNACLV). Cysteine 99 and cysteine 191 are disulfide-bonded. A helical transmembrane segment spans residues 102 to 122 (QMFFIHTFSFMESGILLAMSL). At 123–141 (DRFVAICYPLRYVTVLTHN) the chain is on the cytoplasmic side. The chain crosses the membrane as a helical span at residues 142–162 (RILAMGLGILTKSFTTLFPFP). The Extracellular portion of the chain corresponds to 163–198 (FVVKRLPFCKGNVLHHSYCLHPDLMKVACGDIHVNN). A helical transmembrane segment spans residues 199–219 (IYGLLVIIFTYGMDSTFILLS). Residues 220–239 (YALILRAMLVIISQEQRLKA) lie on the Cytoplasmic side of the membrane. The helical transmembrane segment at 240-260 (LNTCMSHICAVLAFYVPIIAV) threads the bilayer. At 261–275 (SMIHRFWKSAPPVVH) the chain is on the extracellular side. Residues 276–296 (VMMSNVYLFVPPMLNPIIYSV) form a helical membrane-spanning segment. The Cytoplasmic portion of the chain corresponds to 297–314 (KTKEIRKGILKFFHKSQA).

It belongs to the G-protein coupled receptor 1 family.

Its subcellular location is the cell membrane. Its function is as follows. Odorant receptor. The sequence is that of Olfactory receptor 51I1 (OR51I1) from Homo sapiens (Human).